We begin with the raw amino-acid sequence, 56 residues long: Large ribosomal subunit protein bL32 (56 aa).

The tract at residues 1-28 (MAVQQNRKTRSKRGMRRSHDALTTAALS) is disordered. A compositionally biased stretch (basic residues) spans 7-16 (RKTRSKRGMR).

It belongs to the bacterial ribosomal protein bL32 family.

This chain is Large ribosomal subunit protein bL32, found in Vibrio vulnificus (strain CMCP6).